We begin with the raw amino-acid sequence, 343 residues long: DNA repair and recombination protein RadA (343 aa).

An ATP-binding site is contributed by 107–114; the sequence is GEFGAGKS.

It belongs to the eukaryotic RecA-like protein family.

Functionally, involved in DNA repair and in homologous recombination. Binds and assemble on single-stranded DNA to form a nucleoprotein filament. Hydrolyzes ATP in a ssDNA-dependent manner and promotes DNA strand exchange between homologous DNA molecules. This Halobacterium salinarum (strain ATCC 29341 / DSM 671 / R1) protein is DNA repair and recombination protein RadA.